The sequence spans 220 residues: Ribosomal RNA small subunit methyltransferase G 1 (220 aa).

Residues G79, F84, and R150 each coordinate S-adenosyl-L-methionine.

The protein belongs to the methyltransferase superfamily. RNA methyltransferase RsmG family.

Its subcellular location is the cytoplasm. The enzyme catalyses guanosine(527) in 16S rRNA + S-adenosyl-L-methionine = N(7)-methylguanosine(527) in 16S rRNA + S-adenosyl-L-homocysteine. Specifically methylates the N7 position of guanine in position 527 of 16S rRNA. In Syntrophobacter fumaroxidans (strain DSM 10017 / MPOB), this protein is Ribosomal RNA small subunit methyltransferase G 1.